The primary structure comprises 291 residues: Probable cell wall amidase LytH (291 aa).

The first 40 residues, 1–40 (MKKFNDWLEKHNLRNIPTLIVVVAFVLFVFMTIAFLNHND), serve as a signal peptide directing secretion. Residues 41 to 105 (EDSSTIYITE…WVAGWHTNLN (65 aa)) enclose the SH3b domain. The segment at 109 to 146 (DKNPNAKPLKDKTIVLDPGHGGSDQGASSNTHKKSKEK) is disordered. The MurNAc-LAA domain occupies 122–286 (IVLDPGHGGS…VEQAIVEGLR (165 aa)).

The protein belongs to the N-acetylmuramoyl-L-alanine amidase 3 family.

It is found in the secreted. Functionally, probably involved in cell-wall metabolism. This Staphylococcus saprophyticus subsp. saprophyticus (strain ATCC 15305 / DSM 20229 / NCIMB 8711 / NCTC 7292 / S-41) protein is Probable cell wall amidase LytH (lytH).